A 603-amino-acid chain; its full sequence is Prostaglandin G/H synthase 1 (603 aa).

Residues 1-27 (MSRGSRLHRWPLLLLLLLLLPPPPVLP) form the signal peptide. Residues 35-73 (PVNPCCYYPCQHQGICVRFGLDRYQCDCTRTGYSGPNCT) enclose the EGF-like domain. Disulfide bonds link Cys39–Cys50, Cys40–Cys162, Cys44–Cys60, and Cys62–Cys72. 3 N-linked (GlcNAc...) asparagine glycosylation sites follow: Asn71, Asn107, and Asn147. The active-site Proton acceptor is the His210. Residue Tyr388 is the For cyclooxygenase activity of the active site. His391 contacts heme b. Cysteines 572 and 578 form a disulfide.

Belongs to the prostaglandin G/H synthase family. As to quaternary structure, homodimer. Heme b serves as cofactor. N-glycosylated. N-linked glycosylation is necessary for enzymatic activity. Brain cortex. Isoform 2 is expressed in the cerebral cortex and heart.

The protein localises to the microsome membrane. The protein resides in the endoplasmic reticulum membrane. It carries out the reaction (5Z,8Z,11Z,14Z)-eicosatetraenoate + AH2 + 2 O2 = prostaglandin H2 + A + H2O. The catalysed reaction is (5Z,8Z,11Z,14Z)-eicosatetraenoate + 2 O2 = prostaglandin G2. The enzyme catalyses prostaglandin G2 + AH2 = prostaglandin H2 + A + H2O. It catalyses the reaction (9Z,12Z)-octadecadienoate + AH2 + O2 = (9R)-hydroxy-(10E,12Z)-octadecadienoate + A + H2O. It carries out the reaction (9Z,12Z)-octadecadienoate + AH2 + O2 = (9S)-hydroxy-(10E,12Z)-octadecadienoate + A + H2O. The catalysed reaction is (9Z,12Z)-octadecadienoate + AH2 + O2 = (13S)-hydroxy-(9Z,11E)-octadecadienoate + A + H2O. The enzyme catalyses (9Z,12Z)-octadecadienoate + AH2 + O2 = (13R)-hydroxy-(9Z,11E)-octadecadienoate + A + H2O. The protein operates within lipid metabolism; prostaglandin biosynthesis. Its activity is regulated as follows. The cyclooxygenase activity is inhibited by nonsteroidal anti-inflammatory drugs (NSAIDs) including ibuprofen, flurbiprofen, ketoprofen, naproxen, flurbiprofen, anirolac, fenclofenac and diclofenac. In terms of biological role, dual cyclooxygenase and peroxidase that plays an important role in the biosynthesis pathway of prostanoids, a class of C20 oxylipins mainly derived from arachidonate ((5Z,8Z,11Z,14Z)-eicosatetraenoate, AA, C20:4(n-6)), with a particular role in the inflammatory response. The cyclooxygenase activity oxygenates AA to the hydroperoxy endoperoxide prostaglandin G2 (PGG2), and the peroxidase activity reduces PGG2 to the hydroxy endoperoxide prostaglandin H2 (PGH2), the precursor of all 2-series prostaglandins and thromboxanes. This complex transformation is initiated by abstraction of hydrogen at carbon 13 (with S-stereochemistry), followed by insertion of molecular O2 to form the endoperoxide bridge between carbon 9 and 11 that defines prostaglandins. The insertion of a second molecule of O2 (bis-oxygenase activity) yields a hydroperoxy group in PGG2 that is then reduced to PGH2 by two electrons. Involved in the constitutive production of prostanoids in particular in the stomach and platelets. In gastric epithelial cells, it is a key step in the generation of prostaglandins, such as prostaglandin E2 (PGE2), which plays an important role in cytoprotection. In platelets, it is involved in the generation of thromboxane A2 (TXA2), which promotes platelet activation and aggregation, vasoconstriction and proliferation of vascular smooth muscle cells. Can also use linoleate (LA, (9Z,12Z)-octadecadienoate, C18:2(n-6)) as substrate and produce hydroxyoctadecadienoates (HODEs) in a regio- and stereospecific manner, being (9R)-HODE ((9R)-hydroxy-(10E,12Z)-octadecadienoate) and (13S)-HODE ((13S)-hydroxy-(9Z,11E)-octadecadienoate) its major products. This chain is Prostaglandin G/H synthase 1 (PTGS1), found in Canis lupus familiaris (Dog).